Consider the following 379-residue polypeptide: tRNA-specific 2-thiouridylase MnmA (379 aa).

Residues 6–13 (AMSGGVDS) and L32 contribute to the ATP site. C101 acts as the Nucleophile in catalysis. C101 and C199 are oxidised to a cystine. G125 lines the ATP pocket. The segment at 148-150 (KDQ) is interaction with tRNA. C199 acts as the Cysteine persulfide intermediate in catalysis.

Belongs to the MnmA/TRMU family.

Its subcellular location is the cytoplasm. The enzyme catalyses S-sulfanyl-L-cysteinyl-[protein] + uridine(34) in tRNA + AH2 + ATP = 2-thiouridine(34) in tRNA + L-cysteinyl-[protein] + A + AMP + diphosphate + H(+). Functionally, catalyzes the 2-thiolation of uridine at the wobble position (U34) of tRNA, leading to the formation of s(2)U34. This is tRNA-specific 2-thiouridylase MnmA from Paenarthrobacter aurescens (strain TC1).